The primary structure comprises 116 residues: UPF0298 protein EF_2453 (116 aa).

The protein belongs to the UPF0298 family.

It localises to the cytoplasm. This chain is UPF0298 protein EF_2453, found in Enterococcus faecalis (strain ATCC 700802 / V583).